Reading from the N-terminus, the 396-residue chain is Tyrosine--tRNA ligase (396 aa).

The short motif at 39–48 (PTAPDLHLGH) is the 'HIGH' region element. Residues 223 to 227 (KMSKS) carry the 'KMSKS' region motif. An ATP-binding site is contributed by Lys226. An S4 RNA-binding domain is found at 334-395 (LPVPQLLKQA…GKRKFARVTV (62 aa)).

Belongs to the class-I aminoacyl-tRNA synthetase family. TyrS type 2 subfamily. Homodimer.

It is found in the cytoplasm. It catalyses the reaction tRNA(Tyr) + L-tyrosine + ATP = L-tyrosyl-tRNA(Tyr) + AMP + diphosphate + H(+). Functionally, catalyzes the attachment of tyrosine to tRNA(Tyr) in a two-step reaction: tyrosine is first activated by ATP to form Tyr-AMP and then transferred to the acceptor end of tRNA(Tyr). This chain is Tyrosine--tRNA ligase, found in Thiobacillus denitrificans (strain ATCC 25259 / T1).